We begin with the raw amino-acid sequence, 222 residues long: UPF0758 protein Cag_1513 (222 aa).

Residues 100 to 222 (KIMAAGDVFE…WYSFRERGLL (123 aa)) enclose the MPN domain. Zn(2+) is bound by residues H171, H173, and D184. Residues 171-184 (HNHPSGDVNPSNAD) carry the JAMM motif motif.

It belongs to the UPF0758 family.

The polypeptide is UPF0758 protein Cag_1513 (Chlorobium chlorochromatii (strain CaD3)).